We begin with the raw amino-acid sequence, 182 residues long: UPF0301 protein NMCC_1249 (182 aa).

Belongs to the UPF0301 (AlgH) family.

The chain is UPF0301 protein NMCC_1249 from Neisseria meningitidis serogroup C (strain 053442).